Reading from the N-terminus, the 398-residue chain is Succinate--CoA ligase [ADP-forming] subunit beta (398 aa).

Positions 9–254 (KAVLREFGVP…ETEEDAKEIE (246 aa)) constitute an ATP-grasp domain. ATP is bound by residues lysine 46, 53 to 55 (GRG), glutamate 109, serine 112, and glutamate 117. 2 residues coordinate Mg(2+): asparagine 209 and aspartate 223. Substrate-binding positions include asparagine 274 and 331–333 (GIM).

This sequence belongs to the succinate/malate CoA ligase beta subunit family. As to quaternary structure, heterotetramer of two alpha and two beta subunits. Requires Mg(2+) as cofactor.

It carries out the reaction succinate + ATP + CoA = succinyl-CoA + ADP + phosphate. The catalysed reaction is GTP + succinate + CoA = succinyl-CoA + GDP + phosphate. It participates in carbohydrate metabolism; tricarboxylic acid cycle; succinate from succinyl-CoA (ligase route): step 1/1. In terms of biological role, succinyl-CoA synthetase functions in the citric acid cycle (TCA), coupling the hydrolysis of succinyl-CoA to the synthesis of either ATP or GTP and thus represents the only step of substrate-level phosphorylation in the TCA. The beta subunit provides nucleotide specificity of the enzyme and binds the substrate succinate, while the binding sites for coenzyme A and phosphate are found in the alpha subunit. This chain is Succinate--CoA ligase [ADP-forming] subunit beta, found in Rhodopseudomonas palustris (strain ATCC BAA-98 / CGA009).